The sequence spans 465 residues: tRNA modification GTPase MnmE (465 aa).

The (6S)-5-formyl-5,6,7,8-tetrahydrofolate site is built by Arg21, Glu85, and Lys124. The region spanning Gly220–His387 is the TrmE-type G domain. Asn230 contacts K(+). Residues Asn230–Thr235, Ser249–Thr255, and Asp274–Gly277 contribute to the GTP site. Ser234 is a Mg(2+) binding site. K(+) contacts are provided by Ser249, Ile251, and Thr254. Thr255 serves as a coordination point for Mg(2+). Lys465 lines the (6S)-5-formyl-5,6,7,8-tetrahydrofolate pocket.

This sequence belongs to the TRAFAC class TrmE-Era-EngA-EngB-Septin-like GTPase superfamily. TrmE GTPase family. Homodimer. Heterotetramer of two MnmE and two MnmG subunits. K(+) is required as a cofactor.

The protein localises to the cytoplasm. Exhibits a very high intrinsic GTPase hydrolysis rate. Involved in the addition of a carboxymethylaminomethyl (cmnm) group at the wobble position (U34) of certain tRNAs, forming tRNA-cmnm(5)s(2)U34. The polypeptide is tRNA modification GTPase MnmE (Bacteroides fragilis (strain YCH46)).